A 549-amino-acid chain; its full sequence is Oxygen-dependent choline dehydrogenase (549 aa).

Residue 4–33 (DFVIIGSGSAGSALAYRLSEDGKNSVLVIE) participates in FAD binding. H465 functions as the Proton acceptor in the catalytic mechanism. Residues 530-549 (PLARSNQEPWINPRAAVSDR) form a disordered region.

Belongs to the GMC oxidoreductase family. It depends on FAD as a cofactor.

The enzyme catalyses choline + A = betaine aldehyde + AH2. It carries out the reaction betaine aldehyde + NAD(+) + H2O = glycine betaine + NADH + 2 H(+). It functions in the pathway amine and polyamine biosynthesis; betaine biosynthesis via choline pathway; betaine aldehyde from choline (cytochrome c reductase route): step 1/1. Involved in the biosynthesis of the osmoprotectant glycine betaine. Catalyzes the oxidation of choline to betaine aldehyde and betaine aldehyde to glycine betaine at the same rate. The sequence is that of Oxygen-dependent choline dehydrogenase from Rhizobium etli (strain ATCC 51251 / DSM 11541 / JCM 21823 / NBRC 15573 / CFN 42).